A 390-amino-acid polypeptide reads, in one-letter code: Probable inactive secreted aspartyl protease (390 aa).

The N-terminal stretch at 1 to 20 (MQLTIKALVGILTTISAATA) is a signal peptide. Residues 21–69 (VSFDMENLGAEKRGVSGEELHMLHGNEVLARFANGVYPEVANGTRVSKR) constitute a propeptide, removed in mature form. A glycan (N-linked (GlcNAc...) asparagine) is linked at asparagine 62. The 303-residue stretch at 86 to 388 (WAVKAKIGSN…KFDSNEMQIA (303 aa)) folds into the Peptidase A1 domain. Active-site residues include aspartate 104 and aspartate 273. Cysteine 313 and cysteine 346 are oxidised to a cystine.

The protein belongs to the peptidase A1 family.

The protein localises to the secreted. In terms of biological role, probable inactive secreted aspartyl protease. May promote an inflammatory immune response in the host when the host skin barrier is breached. Has no detectable protease activity in vitro on fluorogenic substrates, a peptide library, or with the general protease substrate casein. The presence of the enzyme also does not affect the activity of the secreted aspartyl protease SAP1. The chain is Probable inactive secreted aspartyl protease from Malassezia globosa (strain ATCC MYA-4612 / CBS 7966) (Dandruff-associated fungus).